A 129-amino-acid chain; its full sequence is uncharacterized protein (129 aa).

The span at 91 to 114 shows a compositional bias: basic and acidic residues; the sequence is ASEKVGEMKEAASEKASEMKEAVS. The interval 91 to 129 is disordered; sequence ASEKVGEMKEAASEKASEMKEAVSEKATQAVDAVKEATK.

The protein belongs to the LEA type 1 family.

This is an uncharacterized protein from Haemophilus influenzae (strain ATCC 51907 / DSM 11121 / KW20 / Rd).